A 229-amino-acid polypeptide reads, in one-letter code: Enolase-phosphatase E1 (229 aa).

A compositionally biased stretch (polar residues) spans 208–218 (DTQSTHRQVSS). The interval 208–229 (DTQSTHRQVSSFDDIHPEQIPT) is disordered. Positions 220–229 (DDIHPEQIPT) are enriched in basic and acidic residues.

This sequence belongs to the HAD-like hydrolase superfamily. MasA/MtnC family. Monomer. Mg(2+) serves as cofactor.

It catalyses the reaction 5-methylsulfanyl-2,3-dioxopentyl phosphate + H2O = 1,2-dihydroxy-5-(methylsulfanyl)pent-1-en-3-one + phosphate. It functions in the pathway amino-acid biosynthesis; L-methionine biosynthesis via salvage pathway; L-methionine from S-methyl-5-thio-alpha-D-ribose 1-phosphate: step 3/6. It participates in amino-acid biosynthesis; L-methionine biosynthesis via salvage pathway; L-methionine from S-methyl-5-thio-alpha-D-ribose 1-phosphate: step 4/6. In terms of biological role, bifunctional enzyme that catalyzes the enolization of 2,3-diketo-5-methylthiopentyl-1-phosphate (DK-MTP-1-P) into the intermediate 2-hydroxy-3-keto-5-methylthiopentenyl-1-phosphate (HK-MTPenyl-1-P), which is then dephosphorylated to form the acireductone 1,2-dihydroxy-3-keto-5-methylthiopentene (DHK-MTPene). The chain is Enolase-phosphatase E1 from Cronobacter sakazakii (Enterobacter sakazakii).